A 193-amino-acid polypeptide reads, in one-letter code: dCTP deaminase (193 aa).

DCTP-binding positions include 110–115, aspartate 128, 136–138, tyrosine 171, lysine 178, and glutamine 182; these read RSSLAR and VLE. The Proton donor/acceptor role is filled by glutamate 138. A disordered region spans residues 169 to 193; the sequence is RPYNRRQDAKYKDQQGAVASRIDKD.

This sequence belongs to the dCTP deaminase family. As to quaternary structure, homotrimer.

It carries out the reaction dCTP + H2O + H(+) = dUTP + NH4(+). Its pathway is pyrimidine metabolism; dUMP biosynthesis; dUMP from dCTP (dUTP route): step 1/2. Catalyzes the deamination of dCTP to dUTP. The polypeptide is dCTP deaminase (Pectobacterium atrosepticum (strain SCRI 1043 / ATCC BAA-672) (Erwinia carotovora subsp. atroseptica)).